A 524-amino-acid chain; its full sequence is Na(+)/H(+) antiporter NhaB (524 aa).

Helical transmembrane passes span Ile23–Ala43, Gly44–Leu64, Leu97–Phe117, Leu120–Phe140, Phe144–Ile164, Leu203–Pro223, Phe236–Leu256, Ala304–Ile324, Phe354–Phe374, Leu392–Val412, Ala448–Ile468, and Val476–Phe496.

Belongs to the NhaB Na(+)/H(+) (TC 2.A.34) antiporter family.

The protein localises to the cell inner membrane. It catalyses the reaction 2 Na(+)(in) + 3 H(+)(out) = 2 Na(+)(out) + 3 H(+)(in). Functionally, na(+)/H(+) antiporter that extrudes sodium in exchange for external protons. This chain is Na(+)/H(+) antiporter NhaB, found in Edwardsiella ictaluri (strain 93-146).